We begin with the raw amino-acid sequence, 286 residues long: MTEIQAVLDDPNEPRLITETGVAARVAAIASGVLGALGYRLVRVKVTNRDGGTLQIMAERPDGTMSIDDCEAASRALSPVLDVEDPISSAYRLEMSSPGIDRPLVRQSDFVRWAGHEVKVEMARPVDGRKRFRGILIGAEDGIAVVRRLDAPATEEPTVRLPVADIHDAKLMLTDALIREALRAAKAAGQAIDEEAEAFLDGEDGDDTGVDAGDPDQDDADDALAEATAQPAAPYKGPSRKDGGNKLVGRKAKGKKASPKKSNAKKKAGLETAASSANASTVKETH.

Acidic residues predominate over residues Leu-200–Leu-224. Positions Leu-200 to His-286 are disordered. Residues Val-248–Lys-267 are compositionally biased toward basic residues. Over residues Ala-273–His-286 the composition is skewed to polar residues.

It belongs to the RimP family.

It localises to the cytoplasm. In terms of biological role, required for maturation of 30S ribosomal subunits. The sequence is that of Ribosome maturation factor RimP from Xanthobacter autotrophicus (strain ATCC BAA-1158 / Py2).